Here is a 212-residue protein sequence, read N- to C-terminus: Small ribosomal subunit protein eS1 (212 aa).

It belongs to the eukaryotic ribosomal protein eS1 family.

The polypeptide is Small ribosomal subunit protein eS1 (Ignicoccus hospitalis (strain KIN4/I / DSM 18386 / JCM 14125)).